Reading from the N-terminus, the 122-residue chain is Large ribosomal subunit protein uL14 (122 aa).

This sequence belongs to the universal ribosomal protein uL14 family. As to quaternary structure, part of the 50S ribosomal subunit. Forms a cluster with proteins L3 and L19. In the 70S ribosome, L14 and L19 interact and together make contacts with the 16S rRNA in bridges B5 and B8.

Binds to 23S rRNA. Forms part of two intersubunit bridges in the 70S ribosome. This Lactobacillus helveticus (strain DPC 4571) protein is Large ribosomal subunit protein uL14.